The primary structure comprises 347 residues: NAD-dependent alcohol dehydrogenase (347 aa).

The residue at position 11 (K11) is an N6-methyllysine; partial. Positions 38, 68, 98, 101, 104, 112, and 154 each coordinate Zn(2+). K213 carries the post-translational modification N6-methyllysine; partial.

The protein belongs to the zinc-containing alcohol dehydrogenase family. As to quaternary structure, homodimer and homotetramer. Zn(2+) is required as a cofactor.

The enzyme catalyses a primary alcohol + NAD(+) = an aldehyde + NADH + H(+). The catalysed reaction is a secondary alcohol + NAD(+) = a ketone + NADH + H(+). The chain is NAD-dependent alcohol dehydrogenase (adh) from Saccharolobus solfataricus (strain ATCC 35092 / DSM 1617 / JCM 11322 / P2) (Sulfolobus solfataricus).